Here is a 322-residue protein sequence, read N- to C-terminus: HPr kinase/phosphorylase (322 aa).

Residues H146 and K167 contribute to the active site. 161–168 (GDSGLGKS) provides a ligand contact to ATP. S168 contributes to the Mg(2+) binding site. D185 acts as the Proton acceptor; for phosphorylation activity. Proton donor; for dephosphorylation activity in catalysis. An important for the catalytic mechanism of both phosphorylation and dephosphorylation region spans residues 209–218 (LEVRGLGLLD). E210 is a Mg(2+) binding site. R250 is a catalytic residue. Residues 271–276 (QVAAGR) are important for the catalytic mechanism of dephosphorylation.

This sequence belongs to the HPrK/P family. As to quaternary structure, homohexamer. Requires Mg(2+) as cofactor.

It carries out the reaction [HPr protein]-L-serine + ATP = [HPr protein]-O-phospho-L-serine + ADP + H(+). The catalysed reaction is [HPr protein]-O-phospho-L-serine + phosphate + H(+) = [HPr protein]-L-serine + diphosphate. Functionally, catalyzes the ATP- as well as the pyrophosphate-dependent phosphorylation of a specific serine residue in HPr, a phosphocarrier protein of the phosphoenolpyruvate-dependent sugar phosphotransferase system (PTS). HprK/P also catalyzes the pyrophosphate-producing, inorganic phosphate-dependent dephosphorylation (phosphorolysis) of seryl-phosphorylated HPr (P-Ser-HPr). The polypeptide is HPr kinase/phosphorylase (Burkholderia mallei (strain NCTC 10247)).